The primary structure comprises 271 residues: L-aspartate dehydrogenase (271 aa).

The NAD(+) site is built by alanine 124 and asparagine 192. Residue histidine 222 is part of the active site.

It belongs to the L-aspartate dehydrogenase family.

The catalysed reaction is L-aspartate + NADP(+) + H2O = oxaloacetate + NH4(+) + NADPH + H(+). It catalyses the reaction L-aspartate + NAD(+) + H2O = oxaloacetate + NH4(+) + NADH + H(+). The protein operates within cofactor biosynthesis; NAD(+) biosynthesis; iminoaspartate from L-aspartate (dehydrogenase route): step 1/1. Functionally, specifically catalyzes the NAD or NADP-dependent dehydrogenation of L-aspartate to iminoaspartate. The protein is L-aspartate dehydrogenase of Methanococcoides burtonii (strain DSM 6242 / NBRC 107633 / OCM 468 / ACE-M).